The primary structure comprises 204 residues: Ras-related protein RabL (204 aa).

14–21 is a GTP binding site; the sequence is GDSNVGKT. The Effector region signature appears at 36-44; the sequence is RPPSIGPDY. Residues 62–66 and 120–123 each bind GTP; these read DTCGQ and TKSD. S-geranylgeranyl cysteine attachment occurs at residues Cys203 and Cys204.

It belongs to the small GTPase superfamily. Rab family.

Its subcellular location is the cell membrane. The sequence is that of Ras-related protein RabL (rabL) from Dictyostelium discoideum (Social amoeba).